A 711-amino-acid polypeptide reads, in one-letter code: Retrovirus-related Pol polyprotein from type-1 retrotransposable element R2 (711 aa).

Positions 45–323 (LHLLRGHVPT…QTFRYLGHFF (279 aa)) constitute a Reverse transcriptase domain. The nucleic acid-binding endonuclease stretch occupies residues 444–711 (LFSCPSFDHL…RAVWSRQAGA (268 aa)).

The enzyme catalyses DNA(n) + a 2'-deoxyribonucleoside 5'-triphosphate = DNA(n+1) + diphosphate. The chain is Retrovirus-related Pol polyprotein from type-1 retrotransposable element R2 from Popillia japonica (Japanese beetle).